A 667-amino-acid polypeptide reads, in one-letter code: tRNA 5-methylaminomethyl-2-thiouridine biosynthesis bifunctional protein MnmC (667 aa).

The segment at 1–215 (MKFINGILFN…KREMIRAYFN (215 aa)) is tRNA (mnm(5)s(2)U34)-methyltransferase. The segment at 240–667 (IGAGIAGIVT…LIRKLKKGLK (428 aa)) is FAD-dependent cmnm(5)s(2)U34 oxidoreductase.

It in the N-terminal section; belongs to the methyltransferase superfamily. tRNA (mnm(5)s(2)U34)-methyltransferase family. This sequence in the C-terminal section; belongs to the DAO family. Requires FAD as cofactor.

The protein localises to the cytoplasm. It catalyses the reaction 5-aminomethyl-2-thiouridine(34) in tRNA + S-adenosyl-L-methionine = 5-methylaminomethyl-2-thiouridine(34) in tRNA + S-adenosyl-L-homocysteine + H(+). Catalyzes the last two steps in the biosynthesis of 5-methylaminomethyl-2-thiouridine (mnm(5)s(2)U) at the wobble position (U34) in tRNA. Catalyzes the FAD-dependent demodification of cmnm(5)s(2)U34 to nm(5)s(2)U34, followed by the transfer of a methyl group from S-adenosyl-L-methionine to nm(5)s(2)U34, to form mnm(5)s(2)U34. This is tRNA 5-methylaminomethyl-2-thiouridine biosynthesis bifunctional protein MnmC from Campylobacter hominis (strain ATCC BAA-381 / DSM 21671 / CCUG 45161 / LMG 19568 / NCTC 13146 / CH001A).